Reading from the N-terminus, the 323-residue chain is Calcium homeostasis modulator protein 2 (323 aa).

The Cytoplasmic segment spans residues 1-21 (MAALIAENFRFLSLFFKSKDV). The central pore stretch occupies residues 14 to 39 (LFFKSKDVMIFNGLVALGTVGSQELF). A helical membrane pass occupies residues 22–43 (MIFNGLVALGTVGSQELFSVVA). The Extracellular portion of the chain corresponds to 44–52 (FHCPCSPAR). Intrachain disulfides connect cysteine 46/cysteine 130 and cysteine 48/cysteine 162. A helical membrane pass occupies residues 53-76 (NYLYGLTAIGVPALALFLIGVILN). Residues 77 to 101 (NHTWNLVAECQYRRAKNCSAAPNFL) are Cytoplasmic-facing. A helical transmembrane segment spans residues 102 to 132 (LLSSILGRAAVAPVTWSVISLLRGEAYVCAL). The Extracellular portion of the chain corresponds to 133 to 179 (SEFVDPSSLTAGDKGFPPAHATEVLARFPCGEGPANLSSFREEVSRR). Residues 145-152 (DKGFPPAH) are hemichannel docking. Residues 180–206 (LKYESQLFGWLLIGVVAILVFLTKCLK) form a helical membrane-spanning segment. The Cytoplasmic segment spans residues 207–323 (HYCSPLSYRQ…DNVEMALLTA (117 aa)). An intersubunit interaction region spans residues 214–251 (YRQEAYWAQYRTNEDQLFQRTAEVHSRVLAANNVRRFF).

The protein belongs to the CALHM family. Homo-undecamer. Two undecameric hemichannels can assemble in a head-to-head manner to form a gap junction. Neuron, astrocyte, and microglia.

Its subcellular location is the cell membrane. It carries out the reaction ATP(in) = ATP(out). Inhibited by divalent cations such as Co(2+) and Ni(2+). Pore-forming subunit of Ca(2+) homeostasis modulator channels. Mediates ATP release from astrocytes and ATP-induced Ca(2+) influx in microglia thus regulating neuronal ATP and Ca(2+) homeostasis, synaptic transmission and neuroinflammatory response. May form intercellular gap junctions. The gating mechanism remains unknown. The protein is Calcium homeostasis modulator protein 2 of Mus musculus (Mouse).